Here is a 281-residue protein sequence, read N- to C-terminus: Diaminopimelate epimerase (281 aa).

Residues asparagine 13, glutamine 51, and asparagine 70 each contribute to the substrate site. Cysteine 79 serves as the catalytic Proton donor. Residues 80–81, asparagine 163, asparagine 196, and 214–215 each bind substrate; these read GN and ER. Catalysis depends on cysteine 223, which acts as the Proton acceptor. Residue 224–225 participates in substrate binding; sequence GS.

Belongs to the diaminopimelate epimerase family. As to quaternary structure, homodimer.

The protein resides in the cytoplasm. The enzyme catalyses (2S,6S)-2,6-diaminopimelate = meso-2,6-diaminopimelate. It functions in the pathway amino-acid biosynthesis; L-lysine biosynthesis via DAP pathway; DL-2,6-diaminopimelate from LL-2,6-diaminopimelate: step 1/1. Functionally, catalyzes the stereoinversion of LL-2,6-diaminopimelate (L,L-DAP) to meso-diaminopimelate (meso-DAP), a precursor of L-lysine and an essential component of the bacterial peptidoglycan. The sequence is that of Diaminopimelate epimerase from Alcanivorax borkumensis (strain ATCC 700651 / DSM 11573 / NCIMB 13689 / SK2).